The sequence spans 115 residues: Protein translation factor SUI1 homolog (115 aa).

It belongs to the SUI1 family.

In terms of biological role, probably involved in translation. In Sporobolus stapfianus (Ressurection grass), this protein is Protein translation factor SUI1 homolog.